Here is a 186-residue protein sequence, read N- to C-terminus: Elongation factor P (186 aa).

Residue lysine 33 is modified to N6-(3,6-diaminohexanoyl)-5-hydroxylysine.

The protein belongs to the elongation factor P family. May be beta-lysylated on the epsilon-amino group of Lys-33 by the combined action of EpmA and EpmB, and then hydroxylated on the C5 position of the same residue by EpmC (if this protein is present). Lysylation is critical for the stimulatory effect of EF-P on peptide-bond formation. The lysylation moiety may extend toward the peptidyltransferase center and stabilize the terminal 3-CCA end of the tRNA. Hydroxylation of the C5 position on Lys-33 may allow additional potential stabilizing hydrogen-bond interactions with the P-tRNA.

It localises to the cytoplasm. It participates in protein biosynthesis; polypeptide chain elongation. Its function is as follows. Involved in peptide bond synthesis. Alleviates ribosome stalling that occurs when 3 or more consecutive Pro residues or the sequence PPG is present in a protein, possibly by augmenting the peptidyl transferase activity of the ribosome. Modification of Lys-33 is required for alleviation. The polypeptide is Elongation factor P (Acidithiobacillus ferrooxidans (strain ATCC 23270 / DSM 14882 / CIP 104768 / NCIMB 8455) (Ferrobacillus ferrooxidans (strain ATCC 23270))).